The primary structure comprises 146 residues: 3-hydroxyacyl-[acyl-carrier-protein] dehydratase FabZ (146 aa).

The active site involves histidine 51.

The protein belongs to the thioester dehydratase family. FabZ subfamily.

It localises to the cytoplasm. The catalysed reaction is a (3R)-hydroxyacyl-[ACP] = a (2E)-enoyl-[ACP] + H2O. Its function is as follows. Involved in unsaturated fatty acids biosynthesis. Catalyzes the dehydration of short chain beta-hydroxyacyl-ACPs and long chain saturated and unsaturated beta-hydroxyacyl-ACPs. In Staphylococcus aureus (strain Mu3 / ATCC 700698), this protein is 3-hydroxyacyl-[acyl-carrier-protein] dehydratase FabZ.